The following is a 110-amino-acid chain: UPF0060 membrane protein Nmul_A0351 (110 aa).

The next 4 membrane-spanning stretches (helical) occupy residues 7-27 (LFLF…PYLW), 33-53 (SAWL…LLTL), 63-83 (AAYG…VDGV), and 87-107 (AWDM…MFGP).

It belongs to the UPF0060 family.

The protein resides in the cell inner membrane. In Nitrosospira multiformis (strain ATCC 25196 / NCIMB 11849 / C 71), this protein is UPF0060 membrane protein Nmul_A0351.